The primary structure comprises 209 residues: Probable endopeptidase Cgl2188 (209 aa).

The first 35 residues, 1 to 35 (MGKHRRNNSNATRKAVAASAVALGATAAIASPAQA), serve as a signal peptide directing secretion. Residues 95–209 (ASTGQAIVDA…YMPFHSAVRF (115 aa)) enclose the NlpC/P60 domain. C125 (nucleophile) is an active-site residue. H173 (proton acceptor) is an active-site residue. The active site involves H185.

It belongs to the peptidase C40 family.

It localises to the secreted. This chain is Probable endopeptidase Cgl2188, found in Corynebacterium glutamicum (strain ATCC 13032 / DSM 20300 / JCM 1318 / BCRC 11384 / CCUG 27702 / LMG 3730 / NBRC 12168 / NCIMB 10025 / NRRL B-2784 / 534).